The following is a 330-amino-acid chain: Ribosomal RNA small subunit methyltransferase A (330 aa).

His-29, Leu-31, Gly-56, Glu-77, and Asp-98 together coordinate S-adenosyl-L-methionine. The interval 115–158 (PVRSAGLPQAETAPKGLEPAGSSSQQGPRDWLRQTAGAAAPSRG) is disordered. Asn-177 serves as a coordination point for S-adenosyl-L-methionine.

The protein belongs to the class I-like SAM-binding methyltransferase superfamily. rRNA adenine N(6)-methyltransferase family. RsmA subfamily.

The protein resides in the cytoplasm. The catalysed reaction is adenosine(1518)/adenosine(1519) in 16S rRNA + 4 S-adenosyl-L-methionine = N(6)-dimethyladenosine(1518)/N(6)-dimethyladenosine(1519) in 16S rRNA + 4 S-adenosyl-L-homocysteine + 4 H(+). Specifically dimethylates two adjacent adenosines (A1518 and A1519) in the loop of a conserved hairpin near the 3'-end of 16S rRNA in the 30S particle. May play a critical role in biogenesis of 30S subunits. This chain is Ribosomal RNA small subunit methyltransferase A, found in Polaromonas sp. (strain JS666 / ATCC BAA-500).